We begin with the raw amino-acid sequence, 102 residues long: Protein Tat (102 aa).

Residues 1 to 10 are compositionally biased toward basic and acidic residues; it reads MEPVDPRLEP. The disordered stretch occupies residues 1–20; sequence MEPVDPRLEPWNHPGSQPKT. Residues 1–24 form an interaction with human CREBBP region; the sequence is MEPVDPRLEPWNHPGSQPKTACNK. The interval 1–48 is transactivation; that stretch reads MEPVDPRLEPWNHPGSQPKTACNKCYCKKCCYHCMCCFTKKGLGISYG. C22, C25, and C27 together coordinate Zn(2+). The segment at 22–37 is cysteine-rich; sequence CNKCYCKKCCYHCMCC. K28 is modified (N6-acetyllysine; by host PCAF). Positions 30, 33, 34, and 37 each coordinate Zn(2+). Residues 38-48 form a core region; it reads FTKKGLGISYG. Residues 47-102 form a disordered region; sequence YGRKKRSQRRRPPKSSKDHQDPIPEQPLSRQQPGDQTGQKKQKKALEGKTEADPCD. Basic residues predominate over residues 48–60; it reads GRKKRSQRRRPPK. Residues 49–57 carry the Nuclear localization signal, RNA-binding (TAR), and protein transduction motif; sequence RKKRSQRRR. An interaction with the host capping enzyme RNGTT region spans residues 49–87; that stretch reads RKKRSQRRRPPKSSKDHQDPIPEQPLSRQQPGDQTGQKK. N6-acetyllysine; by host EP300 and GCN5L2 occurs at positions 50 and 51. R52 is subject to Asymmetric dimethylarginine; by host PRMT6. Residues 74 to 85 are compositionally biased toward polar residues; the sequence is LSRQQPGDQTGQ. The span at 90-102 shows a compositional bias: basic and acidic residues; the sequence is KALEGKTEADPCD.

It belongs to the lentiviruses Tat family. Interacts with host CCNT1. Associates with the P-TEFb complex composed at least of Tat, P-TEFb (CDK9 and CCNT1), TAR RNA, RNA Pol II. Recruits the HATs CREBBP, TAF1/TFIID, EP300, PCAF and GCN5L2. Interacts with host KAT5/Tip60; this interaction targets the latter to degradation. Interacts with the host deacetylase SIRT1. Interacts with host capping enzyme RNGTT; this interaction stimulates RNGTT. Binds to host KDR, and to the host integrins ITGAV/ITGB3 and ITGA5/ITGB1. Interacts with host KPNB1/importin beta-1 without previous binding to KPNA1/importin alpha-1. Interacts with EIF2AK2. Interacts with host nucleosome assembly protein NAP1L1; this interaction may be required for the transport of Tat within the nucleus, since the two proteins interact at the nuclear rim. Interacts with host C1QBP/SF2P32; this interaction involves lysine-acetylated Tat. Interacts with the host chemokine receptors CCR2, CCR3 and CXCR4. Interacts with host DPP4/CD26; this interaction may trigger an anti-proliferative effect. Interacts with host LDLR. Interacts with the host extracellular matrix metalloproteinase MMP1. Interacts with host PRMT6; this interaction mediates Tat's methylation. Interacts with, and is ubiquitinated by MDM2/Hdm2. Interacts with host PSMC3 and HTATIP2. Interacts with STAB1; this interaction may overcome SATB1-mediated repression of IL2 and IL2RA (interleukin) in T cells by binding to the same domain than HDAC1. Interacts (when acetylated) with human CDK13, thereby increasing HIV-1 mRNA splicing and promoting the production of the doubly spliced HIV-1 protein Nef. Interacts with host TBP; this interaction modulates the activity of transcriptional pre-initiation complex. Interacts with host RELA. Interacts with host PLSCR1; this interaction negatively regulates Tat transactivation activity by altering its subcellular distribution. In terms of processing, asymmetrical arginine methylation by host PRMT6 seems to diminish the transactivation capacity of Tat and affects the interaction with host CCNT1. Post-translationally, acetylation by EP300, CREBBP, GCN5L2/GCN5 and PCAF regulates the transactivation activity of Tat. EP300-mediated acetylation of Lys-50 promotes dissociation of Tat from the TAR RNA through the competitive binding to PCAF's bromodomain. In addition, the non-acetylated Tat's N-terminus can also interact with PCAF. PCAF-mediated acetylation of Lys-28 enhances Tat's binding to CCNT1. Lys-50 is deacetylated by SIRT1. Polyubiquitination by host MDM2 does not target Tat to degradation, but activates its transactivation function and fosters interaction with CCNT1 and TAR RNA. In terms of processing, phosphorylated by EIF2AK2 on serine and threonine residues adjacent to the basic region important for TAR RNA binding and function. Phosphorylation of Tat by EIF2AK2 is dependent on the prior activation of EIF2AK2 by dsRNA.

It localises to the host nucleus. The protein resides in the host nucleolus. It is found in the host cytoplasm. The protein localises to the secreted. Functionally, transcriptional activator that increases RNA Pol II processivity, thereby increasing the level of full-length viral transcripts. Recognizes a hairpin structure at the 5'-LTR of the nascent viral mRNAs referred to as the transactivation responsive RNA element (TAR) and recruits the cyclin T1-CDK9 complex (P-TEFb complex) that will in turn hyperphosphorylate the RNA polymerase II to allow efficient elongation. The CDK9 component of P-TEFb and other Tat-activated kinases hyperphosphorylate the C-terminus of RNA Pol II that becomes stabilized and much more processive. Other factors such as HTATSF1/Tat-SF1, SUPT5H/SPT5, and HTATIP2 are also important for Tat's function. Besides its effect on RNA Pol II processivity, Tat induces chromatin remodeling of proviral genes by recruiting the histone acetyltransferases (HATs) CREBBP, EP300 and PCAF to the chromatin. This also contributes to the increase in proviral transcription rate, especially when the provirus integrates in transcriptionally silent region of the host genome. To ensure maximal activation of the LTR, Tat mediates nuclear translocation of NF-kappa-B by interacting with host RELA. Through its interaction with host TBP, Tat may also modulate transcription initiation. Tat can reactivate a latently infected cell by penetrating in it and transactivating its LTR promoter. In the cytoplasm, Tat is thought to act as a translational activator of HIV-1 mRNAs. Its function is as follows. Extracellular circulating Tat can be endocytosed by surrounding uninfected cells via the binding to several surface receptors such as CD26, CXCR4, heparan sulfate proteoglycans (HSPG) or LDLR. Neurons are rarely infected, but they internalize Tat via their LDLR. Through its interaction with nuclear HATs, Tat is potentially able to control the acetylation-dependent cellular gene expression. Modulates the expression of many cellular genes involved in cell survival, proliferation or in coding for cytokines or cytokine receptors. Tat plays a role in T-cell and neurons apoptosis. Tat induced neurotoxicity and apoptosis probably contribute to neuroAIDS. Circulating Tat also acts as a chemokine-like and/or growth factor-like molecule that binds to specific receptors on the surface of the cells, affecting many cellular pathways. In the vascular system, Tat binds to ITGAV/ITGB3 and ITGA5/ITGB1 integrins dimers at the surface of endothelial cells and competes with bFGF for heparin-binding sites, leading to an excess of soluble bFGF. This chain is Protein Tat, found in Human immunodeficiency virus type 1 group N (isolate YBF106) (HIV-1).